The primary structure comprises 449 residues: Ribulose bisphosphate carboxylase large chain (449 aa).

Residues 1-2 (MS) constitute a propeptide that is removed on maturation. At Pro3 the chain carries N-acetylproline. N6,N6,N6-trimethyllysine is present on Lys14. Substrate is bound by residues Asn123 and Thr173. Lys175 serves as the catalytic Proton acceptor. Position 177 (Lys177) interacts with substrate. 3 residues coordinate Mg(2+): Lys201, Asp203, and Glu204. Position 201 is an N6-carboxylysine (Lys201). The Proton acceptor role is filled by His294. 3 residues coordinate substrate: Xaa295, His327, and Ser379.

The protein belongs to the RuBisCO large chain family. Type I subfamily. As to quaternary structure, heterohexadecamer of 8 large chains and 8 small chains; disulfide-linked. The disulfide link is formed within the large subunit homodimers. Mg(2+) serves as cofactor. In terms of processing, the disulfide bond which can form in the large chain dimeric partners within the hexadecamer appears to be associated with oxidative stress and protein turnover.

The protein localises to the plastid. Its subcellular location is the chloroplast. It carries out the reaction 2 (2R)-3-phosphoglycerate + 2 H(+) = D-ribulose 1,5-bisphosphate + CO2 + H2O. The enzyme catalyses D-ribulose 1,5-bisphosphate + O2 = 2-phosphoglycolate + (2R)-3-phosphoglycerate + 2 H(+). Its function is as follows. RuBisCO catalyzes two reactions: the carboxylation of D-ribulose 1,5-bisphosphate, the primary event in carbon dioxide fixation, as well as the oxidative fragmentation of the pentose substrate in the photorespiration process. Both reactions occur simultaneously and in competition at the same active site. This chain is Ribulose bisphosphate carboxylase large chain, found in Salacia pallescens.